The sequence spans 895 residues: Tiger protein D1 (895 aa).

A signal peptide spans 1–21; it reads MIHKMYFFLILLFSLFIIVYS. Topologically, residues 22–861 are extracellular; it reads APNRVTRNET…ERKSSKLSGG (840 aa). 27 N-linked (GlcNAc...) asparagine glycosylation sites follow: Asn-29, Asn-52, Asn-171, Asn-181, Asn-253, Asn-257, Asn-277, Asn-288, Asn-351, Asn-368, Asn-407, Asn-428, Asn-451, Asn-481, Asn-507, Asn-521, Asn-573, Asn-583, Asn-593, Asn-623, Asn-652, Asn-685, Asn-720, Asn-757, Asn-766, Asn-780, and Asn-799. The 87-residue stretch at 295 to 381 folds into the IPT/TIG 1 domain; it reads AVISSISSVS…SGSDAVTFTY (87 aa). IPT/TIG domains lie at 560-638 and 642-725; these read PKVE…SFYL and PVIY…TLTY. The helical transmembrane segment at 862-882 threads the bilayer; it reads AIAGITIGCVAGAGALVGSVF. Residues 883-895 are Cytoplasmic-facing; sequence YFKLITRVKKAFN.

It is found in the cell membrane. In terms of biological role, may be involved in the regulation of aggregation. Activates tgrC1. The polypeptide is Tiger protein D1 (tgrD1) (Dictyostelium discoideum (Social amoeba)).